Consider the following 67-residue polypeptide: Guanine nucleotide-binding protein G(I)/G(S)/G(O) subunit gamma-13 (67 aa).

Cys64 is modified (cysteine methyl ester). Cys64 carries S-farnesyl cysteine lipidation. A propeptide spans 65–67 (TIL) (removed in mature form).

It belongs to the G protein gamma family. In terms of assembly, g proteins are composed of 3 units, alpha, beta and gamma.

The protein localises to the cell membrane. Functionally, guanine nucleotide-binding proteins (G proteins) are involved as a modulator or transducer in various transmembrane signaling systems. The beta and gamma chains are required for the GTPase activity, for replacement of GDP by GTP, and for G protein-effector interaction. This is Guanine nucleotide-binding protein G(I)/G(S)/G(O) subunit gamma-13 (Gng13) from Mus musculus (Mouse).